The following is a 143-amino-acid chain: 5-hydroxymethyl-dUMP N-hydrolase (143 aa).

Positions 7, 9, 10, 11, 77, 79, 83, and 107 each coordinate 5-hydroxymethyl-dUMP.

The protein belongs to the 2'-deoxynucleoside 5'-phosphate N-hydrolase 1 family. As to quaternary structure, monomer and homodimer.

It localises to the cytoplasm. The protein resides in the nucleus. The enzyme catalyses 5-hydroxymethyl-dUMP + H2O = 5-hydroxymethyluracil + 2-deoxy-D-ribose 5-phosphate. Part of a nucleotide salvage pathway that eliminates epigenetically modified 5-hydroxymethyl-dCMP (hmdCMP) in a two-step process entailing deamination to cytotoxic 5-hydroxymethyl-dUMP (hmdUMP), followed by its hydrolysis into 5-hydroxymethyluracil (hmU) and 2-deoxy-D-ribose 5-phosphate (deoxyribosephosphate). This chain is 5-hydroxymethyl-dUMP N-hydrolase (dnph1), found in Danio rerio (Zebrafish).